Here is a 272-residue protein sequence, read N- to C-terminus: Ribonuclease 3 (272 aa).

Residues 1 to 20 show a composition bias toward polar residues; that stretch reads MTDDVTNVEQPSTASEQQPQ. Residues 1–38 are disordered; sequence MTDDVTNVEQPSTASEQQPQDVPAAEPSAAKKRRANKA. Residues 44–171 enclose the RNase III domain; that stretch reads AAAIEQRLGH…VIGAIYLDGG (128 aa). A Mg(2+)-binding site is contributed by Glu84. Asp88 is an active-site residue. Residues Asp157 and Glu160 each contribute to the Mg(2+) site. Residue Glu160 is part of the active site. Residues 196-265 enclose the DRBM domain; it reads DPKTVLQEWA…ASAMLAREGV (70 aa).

This sequence belongs to the ribonuclease III family. In terms of assembly, homodimer. The cofactor is Mg(2+).

It localises to the cytoplasm. It carries out the reaction Endonucleolytic cleavage to 5'-phosphomonoester.. In terms of biological role, digests double-stranded RNA. Involved in the processing of primary rRNA transcript to yield the immediate precursors to the large and small rRNAs (23S and 16S). Processes some mRNAs, and tRNAs when they are encoded in the rRNA operon. Processes pre-crRNA and tracrRNA of type II CRISPR loci if present in the organism. The chain is Ribonuclease 3 from Rhodopseudomonas palustris (strain ATCC BAA-98 / CGA009).